A 314-amino-acid polypeptide reads, in one-letter code: Small glutamine-rich tetratricopeptide repeat-containing protein alpha (314 aa).

A disordered region spans residues 65-99 (ATASKEMPQDPRGPDRTPPSEEDSAEAERLKTEGN). Residues 71–83 (MPQDPRGPDRTPP) show a composition bias toward basic and acidic residues. Thr-81 is modified (phosphothreonine). Ser-84 is modified (phosphoserine). Residues 90–99 (EAERLKTEGN) are compositionally biased toward basic and acidic residues. 3 TPR repeats span residues 91 to 124 (AERLKTEGNEQMKLENFEAAVHLYGKAIELNPAN), 125 to 158 (AVYFCNRAAAYSKLGNYVGAVQDCERAIGIDPGY), and 159 to 192 (SKAYGRMGLALSSLNKHAEAVAYYKKALELDPDN). An N6-acetyllysine modification is found at Lys-137. The disordered stretch occupies residues 249–268 (GMISGGHNPLGTPGSSPQHS). Residue Ser-302 is modified to Phosphoserine. Thr-304 carries the post-translational modification Phosphothreonine. Ser-306 bears the Phosphoserine mark.

The protein belongs to the SGT family. Homodimer. Homooligomer. Interacts with DNAJC5 and DNAJC5B. Interacts (via TPR repeats) with HSP90AA1. Interacts (via Gln-rich region) with SLC2A1. Interacts with HSP90AB1. Interacts (via TPR repeats) with HSPA8/Hsc70; the interaction is direct. Interacts with BAG6 (via ubiquitin-like domain); interaction prevents interaction between BAG6 and RNF126. Forms a multiprotein complex, at least composed of DNAJB12, DNAJB14, HSPA8/Hsc70 and SGTA; interaction with DNAJB14 and HSPA8/Hsc70 is direct. As to quaternary structure, (Microbial infection) Interacts with NS1 from parvovirus H-1. As to expression, ubiquitously expressed.

It is found in the cytoplasm. Its subcellular location is the nucleus. Its function is as follows. Co-chaperone that binds misfolded and hydrophobic patches-containing client proteins in the cytosol. Mediates their targeting to the endoplasmic reticulum but also regulates their sorting to the proteasome when targeting fails. Functions in tail-anchored/type II transmembrane proteins membrane insertion constituting with ASNA1 and the BAG6 complex a targeting module. Functions upstream of the BAG6 complex and ASNA1, binding more rapidly the transmembrane domain of newly synthesized proteins. It is also involved in the regulation of the endoplasmic reticulum-associated misfolded protein catabolic process via its interaction with BAG6: collaborates with the BAG6 complex to maintain hydrophobic substrates in non-ubiquitinated states. Competes with RNF126 for interaction with BAG6, preventing the ubiquitination of client proteins associated with the BAG6 complex. Binds directly to HSC70 and HSP70 and regulates their ATPase activity. In Rattus norvegicus (Rat), this protein is Small glutamine-rich tetratricopeptide repeat-containing protein alpha (Sgta).